An 865-amino-acid polypeptide reads, in one-letter code: Probable beta-glucosidase J (865 aa).

Asp-233 is an active-site residue. N-linked (GlcNAc...) asparagine glycosylation is found at Asn-330, Asn-447, Asn-503, and Asn-764. The region spanning 411-579 is the PA14 domain; it reads TGQPGYTFRV…DTDTAIQQAV (169 aa).

The protein belongs to the glycosyl hydrolase 3 family.

It is found in the secreted. It catalyses the reaction Hydrolysis of terminal, non-reducing beta-D-glucosyl residues with release of beta-D-glucose.. It functions in the pathway glycan metabolism; cellulose degradation. Functionally, beta-glucosidases are one of a number of cellulolytic enzymes involved in the degradation of cellulosic biomass. Catalyzes the last step releasing glucose from the inhibitory cellobiose. The sequence is that of Probable beta-glucosidase J (bglJ) from Aspergillus fumigatus (strain CBS 144.89 / FGSC A1163 / CEA10) (Neosartorya fumigata).